The primary structure comprises 422 residues: Enolase (422 aa).

Gln162 is a (2R)-2-phosphoglycerate binding site. Glu204 serves as the catalytic Proton donor. Residues Asp241, Glu284, and Asp311 each coordinate Mg(2+). (2R)-2-phosphoglycerate is bound by residues Lys336, Arg365, Ser366, and Lys387. Lys336 (proton acceptor) is an active-site residue.

It belongs to the enolase family. In terms of assembly, component of the RNA degradosome, a multiprotein complex involved in RNA processing and mRNA degradation. Mg(2+) serves as cofactor.

The protein localises to the cytoplasm. It localises to the secreted. Its subcellular location is the cell surface. It catalyses the reaction (2R)-2-phosphoglycerate = phosphoenolpyruvate + H2O. The protein operates within carbohydrate degradation; glycolysis; pyruvate from D-glyceraldehyde 3-phosphate: step 4/5. Catalyzes the reversible conversion of 2-phosphoglycerate (2-PG) into phosphoenolpyruvate (PEP). It is essential for the degradation of carbohydrates via glycolysis. The polypeptide is Enolase (Legionella pneumophila (strain Lens)).